We begin with the raw amino-acid sequence, 220 residues long: Small ribosomal subunit protein eS8 (220 aa).

Belongs to the eukaryotic ribosomal protein eS8 family.

This chain is Small ribosomal subunit protein eS8 (RPS8A), found in Leishmania major.